A 554-amino-acid chain; its full sequence is Neutral amino acid transporter 9 (554 aa).

The Cytoplasmic segment spans residues 1–112 (MDSDQTPLIN…GSDGTGKNSS (112 aa)). The helical transmembrane segment at 113-133 (IVTIFMIWNTMMGTSILSIPW) threads the bilayer. The segment at 122–127 (TMMGTS) is important for arginine binding and amino acid transport. Arginine is bound at residue Ser127. The Lumenal portion of the chain corresponds to 134 to 139 (GIKQAG). A helical membrane pass occupies residues 140–160 (FTTGVCILFLMGILTLYCCYR). The Cytoplasmic portion of the chain corresponds to 161–191 (VVKSRGTIPLTDTSNWEFPDVCQYYFGSFGR). A helical transmembrane segment spans residues 192–218 (WSSLLFSLVSLIGAMIVYWVLMSNFLF). Over 219–276 (NTGKFIYNYVNDVNVTDDVLSNNGSDKVICPNPDSTRPLNKSMDTYFGNGTNYEQFET) the chain is Lumenal. N-linked (GlcNAc...) asparagine glycosylation is found at Asn232, Asn241, Asn258, and Asn267. Cys248 and Cys417 are oxidised to a cystine. Residues 277–293 (WWSKTNTVPFYLVVLLL) form a helical membrane-spanning segment. Topologically, residues 294 to 302 (PLLSFRSPS) are cytoplasmic. Residues 303–327 (FFAKFNILGTVSIIYLVSLVTLKAA) form a helical membrane-spanning segment. Topologically, residues 328–349 (HLGFHLRFSWNQVQEFFVPEFR) are lumenal. The chain crosses the membrane as a helical span at residues 350–370 (LSFPQLTGILTLAFFIHNCII). The Cytoplasmic portion of the chain corresponds to 371-387 (TLLKNNRNQKNNVRDLS). A helical membrane pass occupies residues 388–408 (IAYLLVGLTYIYVGVAVFASF). Topologically, residues 409 to 430 (PSPPLSKQCIQQNFLDNFPSSD) are lumenal. Residues 431–451 (ILAFVARIFLLFQMMTVYPLL) traverse the membrane as a helical segment. The CARC motif motif lies at 437–447 (RIFLLFQMMTV). The CRAC motif motif lies at 450–456 (LLGYLVR). Residues 452–472 (GYLVRVQLLGHIFGDIYPSVF) lie on the Cytoplasmic side of the membrane. The helical transmembrane segment at 473-493 (HVLALNIAVVGVGVIMARFYP) threads the bilayer. The Lumenal portion of the chain corresponds to 494–500 (NIGGIIR). The helical transmembrane segment at 501 to 521 (FSGAACGLAFVFVYPSLIHMI) threads the bilayer. The Cytoplasmic portion of the chain corresponds to 522–533 (SLHRRGQLKVHS). The helical transmembrane segment at 534–554 (ILIHVSIIVLGIANLIAQFFM) threads the bilayer.

The protein belongs to the amino acid/polyamine transporter 2 family. SLC38A9 subfamily. Associated component of the Ragulator complex. Associated component of the Rag GTPases heterodimers. Glycosylated.

The protein resides in the lysosome membrane. It is found in the late endosome membrane. It carries out the reaction L-leucine(in) = L-leucine(out). The enzyme catalyses L-tyrosine(in) = L-tyrosine(out). The catalysed reaction is L-glutamine(out) = L-glutamine(in). It catalyses the reaction L-asparagine(out) = L-asparagine(in). In terms of biological role, lysosomal amino acid transporter involved in the activation of mTORC1 in response to amino acid levels. Probably acts as an amino acid sensor of the Rag GTPases and Ragulator complexes, 2 complexes involved in amino acid sensing and activation of mTORC1, a signaling complex promoting cell growth in response to growth factors, energy levels, and amino acids. Following activation by amino acids, the Ragulator and Rag GTPases function as a scaffold recruiting mTORC1 to lysosomes where it is in turn activated. SLC38A9 mediates transport of amino acids with low capacity and specificity with a slight preference for polar amino acids. Acts as an arginine sensor. Following activation by arginine binding, mediates transport of L-glutamine, leucine and tyrosine with high efficiency, and is required for the efficient utilization of these amino acids after lysosomal protein degradation. However, the transport mechanism is not well defined and the role of sodium is not clear. Guanine exchange factor (GEF) that, upon arginine binding, stimulates GDP release from RRAGA and therefore activates the Rag GTPase heterodimer and the mTORC1 pathway in response to nutrient sufficiency. The polypeptide is Neutral amino acid transporter 9 (Xenopus tropicalis (Western clawed frog)).